A 4061-amino-acid chain; its full sequence is Hybrid PKS-NRPS synthetase tasS (4061 aa).

The Ketosynthase family 3 (KS3) domain maps to 7–472 (QEPIAVIGMA…GTNAHAIIEG (466 aa)). The active site involves cysteine 180. Residues 586–911 (VFTGQGAQWP…RQKNDVEELL (326 aa)) form a malonyl-CoA:ACP transacylase (MAT) domain region. The tract at residues 977–1113 (HPLLGRRCVE…ATVNVTFHEP (137 aa)) is N-terminal hotdog fold. Residues 977–1280 (HPLLGRRCVE…VRVQPFSVAG (304 aa)) are dehydratase (DH) domain. Residues 977-1282 (HPLLGRRCVE…VQPFSVAGPQ (306 aa)) enclose the PKS/mFAS DH domain. Histidine 1010 functions as the Proton acceptor; for dehydratase activity in the catalytic mechanism. The segment at 1128-1282 (LANAEPQRLY…VQPFSVAGPQ (155 aa)) is C-terminal hotdog fold. Aspartate 1188 functions as the Proton donor; for dehydratase activity in the catalytic mechanism. The interval 1425 to 1619 (LDRFYEEGFE…GFNGVETHTP (195 aa)) is methyltransferase (MT) domain. Residues 2153–2325 (TYFLLGLSGE…GVVGSDMAIG (173 aa)) are ketoreductase (KR) domain. The Carrier 1 domain occupies 2437-2516 (EAIKVVFDTF…LLVEEAVDKL (80 aa)). An O-(pantetheine 4'-phosphoryl)serine modification is found at serine 2475. The segment at 2527-2617 (EHGGEPDLTQ…QKHQEQTSQS (91 aa)) is disordered. Residues 2556–2576 (TSAASSSDTGSDSSPTSNSVS) are compositionally biased toward low complexity. The segment covering 2577–2592 (ETQTGTPLETPMSTTE) has biased composition (polar residues). The tract at residues 2632–3077 (QMTFGQNRFW…ELATWDTESE (446 aa)) is condensation (C) domain. The segment at 3103–3510 (QVIADHPDAV…RGYLTVEGRI (408 aa)) is adenylation (A) (KR) domain. The Carrier 2 domain occupies 3633-3712 (QNLTATERTL…SMAALLDDGV (80 aa)). At serine 3672 the chain carries O-(pantetheine 4'-phosphoryl)serine. Positions 3813 to 3969 (DIDVVLHCAA…LSPLEDAVEA (157 aa)) are reductase (RED) domain.

In the C-terminal section; belongs to the NRP synthetase family.

The catalysed reaction is (2S,4S)-4-hydroxy-4-methylglutamate + 8 malonyl-CoA + 3 S-adenosyl-L-methionine + ATP + 8 NADPH + 11 H(+) = (2S)-3-[(2S)-3,5-dioxo-4-[(2E,4R,6R,8E,10E,12E)-4,6,12-trimethyltetradeca-2,8,10,12-tetraenoyl]pyrrolidin-2-yl]-2-hydroxy-2-methylpropanoate + AMP + 3 S-adenosyl-L-homocysteine + 8 CO2 + diphosphate + 8 NADP(+) + 8 CoA + 6 H2O. Its pathway is secondary metabolite biosynthesis. Hybrid PKS-NRPS synthetase; part of the gene cluster that mediates the biosynthesis of the tetramic acids Sch210971 and Sch210972, potential anti-HIV fungal natural product that contain a decalin core. The PKS module of tasS together with the enoylreductase tasC catalyze the formation of the polyketide unit which is then conjugated to 4-hydroxyl-4-methyl glutamate (HMG) by the condensation domain of the tasS NRPS module. One unique structural feature of Sch210971 and Sch210972 is the tetramic acid motif proposed to be derived from the non-proteinogenic amino acid HMG, by a Dieckmann-type condensation catalyzed by the reductase domain of tasS. The aldolase tasA catalyzes the aldol condensation of 2 molecules of pyruvic acid to yield the intermediate 4-hydroxyl-4-methyl-2-oxoglutarate (HMOG), which can then be stereoselectively transaminated, may be by tasG, to form HMG. The Diels-Alderase tas3 then uses the Dieckmann product of tasS as substrate and catalyzes the Diels-Alder cycloaddition to form the decalin ring of Sch210971 and Sch210972. This is Hybrid PKS-NRPS synthetase tasS from Hapsidospora irregularis.